A 170-amino-acid chain; its full sequence is Myelin-associated oligodendrocyte basic protein (170 aa).

A disordered region spans residues 69–170; that stretch reads SRRATSPQKP…GSPTRAPRFW (102 aa). The span at 82 to 92 shows a compositional bias: low complexity; sequence PAASPVVVRAP. Residues Ser-85, Ser-98, and Ser-107 each carry the phosphoserine modification. The stretch at 93–101 is repeat 1; that stretch reads PAKPKSPPR. The span at 93 to 114 shows a compositional bias: pro residues; sequence PAKPKSPPRPAKPRSPPIPAKP. Positions 93-119 are 3 X 9 AA approximate tandem repeats; sequence PAKPKSPPRPAKPRSPPIPAKPRSPSR. The stretch at 105 to 110 is one 2; half-length repeat; the sequence is PRSPPI. Repeat 3 spans residues 111–119; the sequence is PAKPRSPSR. A compositionally biased stretch (basic and acidic residues) spans 118–130; that stretch reads SRTERQPRPRPEV. The span at 138-151 shows a compositional bias: low complexity; it reads KPPQKSKQPARSSP.

As to expression, expressed predominantly in oligodendrocytes, in CNS myelin of the cerebrum and spinal cord. No expression seen in sciatic nerve.

The protein localises to the cytoplasm. It localises to the perinuclear region. May play a role in compacting or stabilizing the myelin sheath, possibly by binding the negatively charged acidic phospholipids of the cytoplasmic membrane. In Rattus norvegicus (Rat), this protein is Myelin-associated oligodendrocyte basic protein (Mobp).